A 367-amino-acid polypeptide reads, in one-letter code: Carbohydrate sulfotransferase 14 (367 aa).

Residues 1–34 (MPPRKKEYGIKRASGSLVHFRAPVSATTIRRHSA) lie on the Cytoplasmic side of the membrane. A helical; Signal-anchor for type II membrane protein transmembrane segment spans residues 35–55 (VVPSVLTFAVIVASGGLLLMI). Residues 56-367 (EKGMLNSVQT…PNTTTEYCRH (312 aa)) are Lumenal-facing. N-linked (GlcNAc...) asparagine glycosylation is present at asparagine 99. 3'-phosphoadenylyl sulfate is bound by residues 144–150 (PKVACSN) and 202–210 (REPMARLLS). N-linked (GlcNAc...) asparagine glycosylation occurs at asparagine 359.

It belongs to the sulfotransferase 2 family.

The protein localises to the golgi apparatus membrane. In terms of biological role, catalyzes the transfer of sulfate to position 4 of the N-acetylgalactosamine (GalNAc) residue of dermatan sulfate. This is Carbohydrate sulfotransferase 14 (chst14) from Danio rerio (Zebrafish).